The sequence spans 210 residues: Imidazole glycerol phosphate synthase subunit HisH (210 aa).

A Glutamine amidotransferase type-1 domain is found at 3-210 (TIAIIDYGMG…ILKNFALSKA (208 aa)). The active-site Nucleophile is the cysteine 81. Residues histidine 190 and glutamate 192 contribute to the active site.

In terms of assembly, heterodimer of HisH and HisF.

Its subcellular location is the cytoplasm. The enzyme catalyses 5-[(5-phospho-1-deoxy-D-ribulos-1-ylimino)methylamino]-1-(5-phospho-beta-D-ribosyl)imidazole-4-carboxamide + L-glutamine = D-erythro-1-(imidazol-4-yl)glycerol 3-phosphate + 5-amino-1-(5-phospho-beta-D-ribosyl)imidazole-4-carboxamide + L-glutamate + H(+). It carries out the reaction L-glutamine + H2O = L-glutamate + NH4(+). It participates in amino-acid biosynthesis; L-histidine biosynthesis; L-histidine from 5-phospho-alpha-D-ribose 1-diphosphate: step 5/9. IGPS catalyzes the conversion of PRFAR and glutamine to IGP, AICAR and glutamate. The HisH subunit catalyzes the hydrolysis of glutamine to glutamate and ammonia as part of the synthesis of IGP and AICAR. The resulting ammonia molecule is channeled to the active site of HisF. This chain is Imidazole glycerol phosphate synthase subunit HisH, found in Geobacter metallireducens (strain ATCC 53774 / DSM 7210 / GS-15).